Consider the following 506-residue polypeptide: RNA2 polyprotein (506 aa).

Belongs to the nepoviruses RNA2 polyprotein family. Specific enzymatic cleavages in vivo by the P1 encoded 3C-like protease yield mature proteins.

The protein resides in the host cell junction. Its subcellular location is the host plasmodesma. The protein localises to the virion. Functionally, the movement protein is assembled into tubules that allow the transport of virions from cell to cell. The sequence is that of RNA2 polyprotein from Beta vulgaris subsp. vulgaris (Beet).